A 282-amino-acid polypeptide reads, in one-letter code: uncharacterized protein (282 aa).

4 consecutive transmembrane segments (helical) span residues W130–L150, S170–A190, A191–V211, and I223–A243. Residues D263–A282 form a disordered region.

It is found in the cell membrane. This is an uncharacterized protein from Mycobacterium tuberculosis (strain CDC 1551 / Oshkosh).